Here is a 427-residue protein sequence, read N- to C-terminus: 3-phosphoshikimate 1-carboxyvinyltransferase (427 aa).

The 3-phosphoshikimate site is built by K22, S23, and R27. K22 contributes to the phosphoenolpyruvate binding site. The phosphoenolpyruvate site is built by G96 and R124. Positions 169, 170, 171, 197, 313, 336, and 340 each coordinate 3-phosphoshikimate. Position 171 (Q171) interacts with phosphoenolpyruvate. D313 acts as the Proton acceptor in catalysis. The phosphoenolpyruvate site is built by R344, R386, and K411.

The protein belongs to the EPSP synthase family. As to quaternary structure, monomer.

It localises to the cytoplasm. The enzyme catalyses 3-phosphoshikimate + phosphoenolpyruvate = 5-O-(1-carboxyvinyl)-3-phosphoshikimate + phosphate. The protein operates within metabolic intermediate biosynthesis; chorismate biosynthesis; chorismate from D-erythrose 4-phosphate and phosphoenolpyruvate: step 6/7. Catalyzes the transfer of the enolpyruvyl moiety of phosphoenolpyruvate (PEP) to the 5-hydroxyl of shikimate-3-phosphate (S3P) to produce enolpyruvyl shikimate-3-phosphate and inorganic phosphate. This chain is 3-phosphoshikimate 1-carboxyvinyltransferase, found in Salmonella typhimurium (strain LT2 / SGSC1412 / ATCC 700720).